The following is a 278-amino-acid chain: Biotin synthase (278 aa).

The Radical SAM core domain maps to 1–227; that stretch reads MQIMLCAISN…NAHIMVAGGR (227 aa). Residues Cys16, Cys20, and Cys23 each contribute to the [4Fe-4S] cluster site. [2Fe-2S] cluster is bound by residues Cys60, Cys95, and Cys153.

This sequence belongs to the radical SAM superfamily. Biotin synthase family. Homodimer. [4Fe-4S] cluster is required as a cofactor. The cofactor is [2Fe-2S] cluster.

It carries out the reaction (4R,5S)-dethiobiotin + (sulfur carrier)-SH + 2 reduced [2Fe-2S]-[ferredoxin] + 2 S-adenosyl-L-methionine = (sulfur carrier)-H + biotin + 2 5'-deoxyadenosine + 2 L-methionine + 2 oxidized [2Fe-2S]-[ferredoxin]. It participates in cofactor biosynthesis; biotin biosynthesis; biotin from 7,8-diaminononanoate: step 2/2. Its function is as follows. Catalyzes the conversion of dethiobiotin (DTB) to biotin by the insertion of a sulfur atom into dethiobiotin via a radical-based mechanism. The polypeptide is Biotin synthase (Campylobacter lari (strain RM2100 / D67 / ATCC BAA-1060)).